Reading from the N-terminus, the 1698-residue chain is Protein DOP1 (1698 aa).

Ser244 bears the Phosphoserine mark.

It belongs to the DOP1 family. As to quaternary structure, interacts with MON2.

Its subcellular location is the golgi apparatus membrane. Functionally, required for traffic between late Golgi and early endosomes, and for the normal structure and organization of the endoplasmic reticulum. Required for normal cellular morphogenesis. The sequence is that of Protein DOP1 (DOP1) from Saccharomyces cerevisiae (strain ATCC 204508 / S288c) (Baker's yeast).